The primary structure comprises 513 residues: MQLNSTEISDLIKQRIESFNVVSEARNEGTIVSVSDGIIRIHGLADVMQGEMIELPGNRYALALNLERDSVGAVVMGPYADLREGMKVTGTGRILEVPVGPELLGRVVNTLGEPIDGKGPIGAKQTSPVEVIAPGVIDRKSVDQPVQTGYKSVDSMIPIGRGQRELIIGDRQTGKTALAIDAIINQKNSGIYSIYVAIGQKASTIANVVRKLEEHGALKNTIVVVASASESAALQYLAPYSGCAMGEYFRDRGEDALIVYDDLSKQAVAYRQISLLLRRPPGREAFPGDVFYLHSRLLERAARVNEEYVERFTKGEVKGKTGSLTALPIIETQAGDVSAFVPTNVISITDGQIFLQTELFNAGVRPAVDPGISVSRVGGAAQTKIVKKLSGGIRTALAAYRELAAFAQFSSDLDEATKRQLTHGQKVTELMKQKQYAPMSVFDQALVIFAAERGYLTDVELNKVLDFEAALLSYARAHYAELAAQIDKTGAYNDEIEAQLKKLVDDFKATQTW.

169–176 (GDRQTGKT) is a binding site for ATP.

Belongs to the ATPase alpha/beta chains family. As to quaternary structure, F-type ATPases have 2 components, CF(1) - the catalytic core - and CF(0) - the membrane proton channel. CF(1) has five subunits: alpha(3), beta(3), gamma(1), delta(1), epsilon(1). CF(0) has three main subunits: a(1), b(2) and c(9-12). The alpha and beta chains form an alternating ring which encloses part of the gamma chain. CF(1) is attached to CF(0) by a central stalk formed by the gamma and epsilon chains, while a peripheral stalk is formed by the delta and b chains.

The protein localises to the cell inner membrane. It catalyses the reaction ATP + H2O + 4 H(+)(in) = ADP + phosphate + 5 H(+)(out). In terms of biological role, produces ATP from ADP in the presence of a proton gradient across the membrane. The alpha chain is a regulatory subunit. The polypeptide is ATP synthase subunit alpha (Vibrio cholerae serotype O1 (strain ATCC 39541 / Classical Ogawa 395 / O395)).